The chain runs to 114 residues: Putative movement protein (114 aa).

Residues 27-47 (LIGIILLVTVCLIVLWVCIML) traverse the membrane as a helical segment. The tract at residues 79–114 (RTPFEATGPERERNWDARRQSTTVNPASQPNTGSVF) is disordered. Residues 86-97 (GPERERNWDARR) are compositionally biased toward basic and acidic residues. Residues 98–114 (QSTTVNPASQPNTGSVF) show a composition bias toward polar residues.

It belongs to the nanovirus movement protein family.

It is found in the host cell membrane. Functionally, may transport viral genome to neighboring plant cells directly through plasmosdesmata, without any budding. The movement protein allows efficient cell to cell propagation, by bypassing the host cell wall barrier. The sequence is that of Putative movement protein (DNA-M) from Faba bean necrotic yellows virus (isolate Syrian SV292-88) (FBNYV).